The chain runs to 553 residues: Cytochrome P450 monooxygenase alnD (553 aa).

Residues L351–V371 form a helical membrane-spanning segment. C493 contributes to the heme binding site. N518 carries an N-linked (GlcNAc...) asparagine glycan.

It belongs to the cytochrome P450 family. Heme serves as cofactor.

Its subcellular location is the membrane. Its pathway is polyketide biosynthesis. Functionally, cytochrome P450 monooxygenase; part of the gene cluster that mediates the biosynthesis of asperlin, a polyketide showing anti-inflammatory, antitumor and antibiotic activities. The first step of the asperlin biosynthesis is the production of the intermediate 2,4,6-octatrienoic acid by the highly redusing polyketide synthase alnA with cleavage of the PKS product by the esterase alnB. 2,4,6-octatrienoic acid is further converted to asperlin via several steps involving the remaining enzymes from the cluster. The chain is Cytochrome P450 monooxygenase alnD from Emericella nidulans (strain FGSC A4 / ATCC 38163 / CBS 112.46 / NRRL 194 / M139) (Aspergillus nidulans).